The chain runs to 1304 residues: Splicing factor 3B subunit 1 (1304 aa).

Disordered stretches follow at residues 100-119 and 124-148; these read QYDP…EDEY and RTMI…PKMN. Positions 104–119 are enriched in basic and acidic residues; sequence FAEHRPPKIADREDEY. Residue threonine 125 is modified to Phosphothreonine. Serine 129 bears the Phosphoserine mark. At lysine 141 the chain carries N6-acetyllysine. Residue threonine 142 is modified to Phosphothreonine. A Citrulline modification is found at arginine 157. The segment at 173–360 is disordered; that stretch reads AEKAKAGELK…PVLTPGKTPI (188 aa). The interval 190–342 is U2AF homology region; mediates interaction with RBM39; it reads SQPPSKRKRR…KRKSRWDETP (153 aa). Serine 194 is subject to Phosphoserine. A phosphothreonine mark is found at threonine 203, threonine 207, and threonine 211. Lysine 214 carries the post-translational modification N6-acetyllysine; alternate. Lysine 214 participates in a covalent cross-link: Glycyl lysine isopeptide (Lys-Gly) (interchain with G-Cter in SUMO2); alternate. A phosphothreonine mark is found at threonine 223 and threonine 227. The interaction with PPP1R8 stretch occupies residues 223–491; that stretch reads TPGHTPSLRW…VDESTLSPEE (269 aa). Serine 229 is subject to Phosphoserine. Residues 231–241 show a composition bias toward basic and acidic residues; the sequence is RWDETPGRAKG. 8 positions are modified to phosphothreonine: threonine 235, threonine 244, threonine 248, threonine 257, threonine 261, threonine 267, threonine 273, and threonine 278. Serine 287 is subject to Phosphoserine. A compositionally biased stretch (basic and acidic residues) spans 291–304; it reads NRWDETPKTERDTP. Residues threonine 296, threonine 299, threonine 303, and threonine 313 each carry the phosphothreonine modification. Serine 322 is modified (phosphoserine). Phosphothreonine occurs at positions 326 and 328. Residue serine 332 is modified to Phosphoserine. Threonine 341 carries the phosphothreonine modification. The span at 342-352 shows a compositional bias: polar residues; the sequence is PASQMGGSTPV. Phosphoserine occurs at positions 344 and 349. Phosphothreonine is present on residues threonine 350 and threonine 354. Serine 400 is subject to Phosphoserine. Lysine 413 is covalently cross-linked (Glycyl lysine isopeptide (Lys-Gly) (interchain with G-Cter in SUMO2); alternate). Lysine 413 participates in a covalent cross-link: Glycyl lysine isopeptide (Lys-Gly) (interchain with G-Cter in SUMO1); alternate. Position 426 is a phosphothreonine (threonine 426). Lysine 430 participates in a covalent cross-link: Glycyl lysine isopeptide (Lys-Gly) (interchain with G-Cter in SUMO2). Threonine 434 bears the Phosphothreonine; by DYRK1A mark. Phosphothreonine is present on threonine 436. At serine 488 the chain carries Phosphoserine. HEAT repeat units lie at residues 529–568, 569–603, 604–641, 643–677, 680–718, 763–801, 843–881, 1010–1048, 1052–1090, 1122–1160, and 1163–1201; these read GPLF…DLVR, PYVH…LAKA, AGLA…ALGI, SLLP…LMGC, LPHL…AATP, NYYT…TDGV, KVGA…NLGA, TPPI…RGAE, AREW…AIGP, TCSP…YIGE, and KDYI…GVYG. The interval 529-568 is interaction with SF3B14; it reads GPLFNQILPLLMSPTLEDQERHLLVKVIDRILYKLDDLVR. The interaction with PHF5A stretch occupies residues 547–550; it reads QERH. Lysine 554 and lysine 562 each carry N6-acetyllysine. The tract at residues 1156–1157 is interaction with PHF5A; the sequence is EY. An interaction with SF3B3 and SF3B5 region spans residues 1248-1304; the sequence is QYCLQGLFHPARKVRDVYWKIYNSIYIGSQDALIAHYPRIYNDDKNTYIRYELDYIL.

This sequence belongs to the SF3B1 family. In terms of assembly, component of the 17S U2 SnRNP complex, a ribonucleoprotein complex that contains small nuclear RNA (snRNA) U2 and a number of specific proteins. Part of the SF3B subcomplex of the 17S U2 SnRNP complex. SF3B associates with the splicing subcomplex SF3A and a 12S RNA unit to form the U2 small nuclear ribonucleoproteins complex (U2 snRNP). Within the SF3B complex, interacts directly (via HEAT domain) with SF3B3, SF3B5, SF3B6 and (via HEAT domain) with PHF5A. The SF3B subcomplex interacts with U2AF2. Identified in the spliceosome C complex. Component of the minor (U12-type spliceosome) spliceosome. Within the minor spliceosome complex, interacts with SCNM1 and CRIPT. Component of the B-WICH complex, at least composed of SMARCA5/SNF2H, BAZ1B/WSTF, SF3B1, DEK, MYO1C, ERCC6, MYBBP1A and DDX21. Phosphorylated form interacts with PPP1R8. Interacts with PQBP1. Interacts with RBM17. Interacts with RBM39. Interacts with SETX. Interacts with RBM15. Interacts with USH1G. Interacts with SDE2. Interacts with U2AF1. Interacts with CACTIN. Interacts with ZRSR1. Interacts with CYREN. In terms of processing, phosphorylated. Phosphorylation occurs concomitantly with the splicing catalytic steps. Phosphorylation on Thr-244, Thr-248 and Thr-313 by cyclin-dependent kinases promotes interaction with PPP1R8 during mitosis. Post-translationally, citrullinated by PADI4.

It is found in the nucleus. The protein resides in the nucleus speckle. Functionally, component of the 17S U2 SnRNP complex of the spliceosome, a large ribonucleoprotein complex that removes introns from transcribed pre-mRNAs. The 17S U2 SnRNP complex (1) directly participates in early spliceosome assembly and (2) mediates recognition of the intron branch site during pre-mRNA splicing by promoting the selection of the pre-mRNA branch-site adenosine, the nucleophile for the first step of splicing. Within the 17S U2 SnRNP complex, SF3B1 is part of the SF3B subcomplex, which is required for 'A' complex assembly formed by the stable binding of U2 snRNP to the branchpoint sequence in pre-mRNA. Sequence independent binding of SF3A and SF3B subcomplexes upstream of the branch site is essential, it may anchor U2 snRNP to the pre-mRNA. May also be involved in the assembly of the 'E' complex. Also acts as a component of the minor spliceosome, which is involved in the splicing of U12-type introns in pre-mRNAs. Together with other U2 snRNP complex components may also play a role in the selective processing of microRNAs (miRNAs) from the long primary miRNA transcript, pri-miR-17-92. The polypeptide is Splicing factor 3B subunit 1 (Homo sapiens (Human)).